The sequence spans 312 residues: Acetylglutamate kinase (312 aa).

Substrate-binding positions include 77-78 (GG), Arg-99, and Asn-192.

It belongs to the acetylglutamate kinase family. ArgB subfamily.

It localises to the cytoplasm. The catalysed reaction is N-acetyl-L-glutamate + ATP = N-acetyl-L-glutamyl 5-phosphate + ADP. It functions in the pathway amino-acid biosynthesis; L-arginine biosynthesis; N(2)-acetyl-L-ornithine from L-glutamate: step 2/4. Catalyzes the ATP-dependent phosphorylation of N-acetyl-L-glutamate. In Synechococcus sp. (strain JA-2-3B'a(2-13)) (Cyanobacteria bacterium Yellowstone B-Prime), this protein is Acetylglutamate kinase.